A 1012-amino-acid chain; its full sequence is MKMEDLFSLLPWLRDVPVQNQFSLDDKMYSDALKLFTESKSILSNNVSPIGSTTPEELERYMFAFILYASKRLGAKTTGDASEGSNQSGITLCQKLKAVKLNLVDFFKELPQFVVKIGPILSDMYGADWEKRLEAKELQANFVHLSLLSKYYKRAYQEFFKTNEVDKEVADPGTSSSDSISDYYRFGWLLFLALRVHAFSRFKDLVTCTNGIVSVLAILIIHIPARLRKFSALDLPLFEKKIDRGVNLVASLCQKYDTSEDEVKHMMEKANELILEILKKNPCSASLCKTENLENIDPDDLTYFEDLLEDSSLPNCISMLEKDYDAAIWNKGDIDERVFVNVDDSLLGSGSLSGGAINISGLREIRCNGLFNETIASPLSPCRSPALHVNGARGGVNIRMISTPVSTAMTTAKWLRTYISPLPSKPSPQLEKYLMSCDRNISSEVVRRAHIIMEAIFPNSALGERCIAGSLPNSNLTDNIWAQQRRLEALKLYYRVLETMCTAEAQLLHANNLTSLLTNERFHRCMLACSAELVLATHKTVTMLFPAVLEKTGITAFDLSKVIESFIRHEDSLPRELRRHLNSLEERLLESMAWEKGSSMDNSLIIARPALSAGINRFGLLAEPMPFLNAMAAHIEVSTGGLPPLPSSCKHEFAAGQNGDIRSPKRACTEYRSVLVERNSFTSPVKDRLINNLKQKLTPPALQSAFASPTRLSPGGGGETCAETGINIFFSKIVKLAAVRINGMIERLEKLEKQSQTQQLREQLRENVYCRFHIILNQRTSLFFNRHIDQIILCAFYGVAKISQYELTFKEIILNYRKQPQCKPQVFRSVFVDWSFSRRNRQGQDHVDIITFYNEVFIPSVKPLLGELGPQGACVKTDLIPESNNDKDGQCPGSPKLSTFPSLPDMSPKKVAKNVYVSPLRSSKMDALISNSSKSYYACVGESTHAFQSPSKDLTAINDRLNSTSKVRGALNFDTDAGLVSDSLVANSLYLQNGNCATTSSVGPLKTEQPDS.

Residues 403 to 604 form a domain A region; that stretch reads TPVSTAMTTA…EKGSSMDNSL (202 aa). Residues 403-863 are pocket; that stretch reads TPVSTAMTTA…NEVFIPSVKP (461 aa). Positions 605 to 723 are spacer; it reads IIARPALSAG…PGGGGETCAE (119 aa). The segment at 724 to 863 is domain B; sequence TGINIFFSKI…NEVFIPSVKP (140 aa). Positions 884–905 are disordered; sequence NNDKDGQCPGSPKLSTFPSLPD.

This sequence belongs to the retinoblastoma protein (RB) family.

It localises to the nucleus. Functionally, regulator of biological processes that recruits a histone deacetylase to control gene transcription. May play a role in the entry into mitosis, negatively regulating the cell proliferation. Formation of stable complexes with geminiviridae replication-associated proteins may create a cellular environment which favors viral DNA replication. This chain is Retinoblastoma-related protein (RB), found in Oxybasis rubra (Red goosefoot).